Consider the following 742-residue polypeptide: Tegument protein UL47 (742 aa).

A compositionally biased stretch (basic and acidic residues) spans 1 to 10 (MDAARDGRPE). Disordered regions lie at residues 1-128 (MDAA…TAHL) and 155-199 (EFPP…DDAA). The Nuclear localization signal motif lies at 10–30 (ERRPRRSGTYRTHPFQRPSAR). The span at 18–37 (TYRTHPFQRPSARRSLLDAL) shows a compositional bias: low complexity. The segment covering 38–62 (RAADAEAAERPRVRRPRPDFQRPPD) has biased composition (basic and acidic residues). The segment covering 63-88 (EDTSEDENVYDYIDGDSSDSADDYDS) has biased composition (acidic residues). The Nuclear export signal signature appears at 95-122 (RGPNHGAGDAMDTDAPPERAPEGGAPQD). The Nuclear export signal signature appears at 485-495 (LSAYLTLFVAL).

The protein belongs to the alphaherpesvirinae HHV-1 UL47 family. As to quaternary structure, interacts with US3 kinase. Interacts with UL31 and UL34; these interactions seem important for efficient virion nuclear egress. Interacts with UL41/VHS. Phosphorylated by US3. This phosphorylation is required for proper nuclear localization.

It is found in the virion tegument. Its subcellular location is the host nucleus. It localises to the host cytoplasm. Its function is as follows. Tegument protein that can bind to various RNA transcripts. Plays a role in the attenuation of selective viral and cellular mRNA degradation by modulating the activity of host shutoff RNase UL41/VHS. Also plays a role in the primary envelopment of virions in the perinuclear space, probably by interacting with two nuclear egress proteins UL31 and UL34. This is Tegument protein UL47 from Bos taurus (Bovine).